Reading from the N-terminus, the 89-residue chain is Small ribosomal subunit protein uS15 (89 aa).

It belongs to the universal ribosomal protein uS15 family. As to quaternary structure, part of the 30S ribosomal subunit. Forms a bridge to the 50S subunit in the 70S ribosome, contacting the 23S rRNA.

One of the primary rRNA binding proteins, it binds directly to 16S rRNA where it helps nucleate assembly of the platform of the 30S subunit by binding and bridging several RNA helices of the 16S rRNA. Functionally, forms an intersubunit bridge (bridge B4) with the 23S rRNA of the 50S subunit in the ribosome. This chain is Small ribosomal subunit protein uS15, found in Pseudomonas putida (strain ATCC 700007 / DSM 6899 / JCM 31910 / BCRC 17059 / LMG 24140 / F1).